The following is a 71-amino-acid chain: Small ribosomal subunit protein bS21 (71 aa).

Positions 49–59 (AAAAVKRHAKK) are enriched in basic residues. The disordered stretch occupies residues 49 to 71 (AAAAVKRHAKKVQREQRRSVRLY). Residues 60 to 71 (VQREQRRSVRLY) show a composition bias toward basic and acidic residues.

Belongs to the bacterial ribosomal protein bS21 family.

The polypeptide is Small ribosomal subunit protein bS21 (Stutzerimonas stutzeri (strain A1501) (Pseudomonas stutzeri)).